The chain runs to 381 residues: Cytochrome b (381 aa).

The next 4 membrane-spanning stretches (helical) occupy residues 33-53 (FGSLLGICLIIQILTGLFLAM), 77-98 (WLLRNLHANGASMFFMCLFLHV), 113-133 (WNIGVILLLTVMATAFVGYVL), and 178-198 (FFAFHFILPFIIVAFAAVHLL). Heme b contacts are provided by histidine 83 and histidine 97. The heme b site is built by histidine 182 and histidine 196. Histidine 201 lines the a ubiquinone pocket. The next 4 membrane-spanning stretches (helical) occupy residues 226 to 246 (IKDALGLIFLILSLLLLGLFS), 288 to 308 (LGGVLALLASILILLIIPLLH), 320 to 340 (IFQTLFWILTADLITLTWIGG), and 347 to 367 (FIIIGQLALMLYFLLILALMP).

This sequence belongs to the cytochrome b family. As to quaternary structure, the cytochrome bc1 complex contains 11 subunits: 3 respiratory subunits (MT-CYB, CYC1 and UQCRFS1), 2 core proteins (UQCRC1 and UQCRC2) and 6 low-molecular weight proteins (UQCRH/QCR6, UQCRB/QCR7, UQCRQ/QCR8, UQCR10/QCR9, UQCR11/QCR10 and a cleavage product of UQCRFS1). This cytochrome bc1 complex then forms a dimer. The cofactor is heme b.

The protein localises to the mitochondrion inner membrane. Functionally, component of the ubiquinol-cytochrome c reductase complex (complex III or cytochrome b-c1 complex) that is part of the mitochondrial respiratory chain. The b-c1 complex mediates electron transfer from ubiquinol to cytochrome c. Contributes to the generation of a proton gradient across the mitochondrial membrane that is then used for ATP synthesis. The chain is Cytochrome b (MT-CYB) from Dasykaluta rosamondae (Little red marsupial mouse).